We begin with the raw amino-acid sequence, 541 residues long: FAD-linked oxidoreductase pynB (541 aa).

Residues 1-20 (MRLSARGFVWSALLACTASA) form the signal peptide. Asn30, Asn57, Asn117, Asn131, Asn158, Asn253, Asn306, Asn343, Asn430, and Asn461 each carry an N-linked (GlcNAc...) asparagine glycan. The FAD-binding PCMH-type domain maps to 71–242 (FNEFPALIAY…VDFDLQLMQF (172 aa)).

The protein belongs to the oxygen-dependent FAD-linked oxidoreductase family. Requires FAD as cofactor.

Its pathway is secondary metabolite biosynthesis. Its function is as follows. FAD-linked oxidoreductase; part of the gene cluster that mediates the biosynthesis of pyranonigrins, a family of antioxidative compounds. The first step of pyranonigrins biosynthesis is performed by the hybrid PKS-NRPS synthetase that condenses 6 malonyl-CoA units to an acetyl starter unit, to form a 1,3,5-trioxotetradecane-6,8-dienyl-ACP. The enoyl reductase (ER) domain of pynA is likely to be functional during the first two rounds of polyketide chain extension, to generate the saturated C-C bonds of the alkyl side chain. PynA subsequently forms the amide bond between the acyl chain and L-serine. Although pynA has a terminal reductase domain, it appears to require the thioesterase pynI for the release of the straight-chain intermediate from pynA via the formation of a tetramic acid pyranonigrin J. The methyltransferase pynC then coverts pyranonigrin J to pyranonigrin I via N-methylation. The FAD-dependent monooxygenase pynG catalyzes an epoxidation-mediated cyclization to form the dihydro-gamma-pyrone moiety, followed by pynD-catalyzed oxidation of the alcohol to the ketone and enolization to yield the characteristic tetramic acid-fused gamma-pyrone core of pyranonigrin H. Pyranonigrin H is substrate of pynH for dehydration-mediated exo-methylene formation from the serine side chain to produce pyranonigrin E, before the oxidase pynE reduces the exo-methylene of pyranonigrin E into a pendant methyl to form pyranonigrin G. The FAD-linked oxidoreductase pynB performs the reverse reaction and converts pyranonigrin G back to pyranonigrin E. In Aspergillus niger (strain ATCC MYA-4892 / CBS 513.88 / FGSC A1513), this protein is FAD-linked oxidoreductase pynB.